The primary structure comprises 249 residues: Segregation and condensation protein A (249 aa).

The protein belongs to the ScpA family. In terms of assembly, component of a cohesin-like complex composed of ScpA, ScpB and the Smc homodimer, in which ScpA and ScpB bind to the head domain of Smc. The presence of the three proteins is required for the association of the complex with DNA.

Its subcellular location is the cytoplasm. Its function is as follows. Participates in chromosomal partition during cell division. May act via the formation of a condensin-like complex containing Smc and ScpB that pull DNA away from mid-cell into both cell halves. In Listeria welshimeri serovar 6b (strain ATCC 35897 / DSM 20650 / CCUG 15529 / CIP 8149 / NCTC 11857 / SLCC 5334 / V8), this protein is Segregation and condensation protein A.